We begin with the raw amino-acid sequence, 270 residues long: Acyl-[acyl-carrier-protein]--UDP-N-acetylglucosamine O-acyltransferase (270 aa).

It belongs to the transferase hexapeptide repeat family. LpxA subfamily. As to quaternary structure, homotrimer.

Its subcellular location is the cytoplasm. It carries out the reaction a (3R)-hydroxyacyl-[ACP] + UDP-N-acetyl-alpha-D-glucosamine = a UDP-3-O-[(3R)-3-hydroxyacyl]-N-acetyl-alpha-D-glucosamine + holo-[ACP]. It participates in glycolipid biosynthesis; lipid IV(A) biosynthesis; lipid IV(A) from (3R)-3-hydroxytetradecanoyl-[acyl-carrier-protein] and UDP-N-acetyl-alpha-D-glucosamine: step 1/6. Functionally, involved in the biosynthesis of lipid A, a phosphorylated glycolipid that anchors the lipopolysaccharide to the outer membrane of the cell. The protein is Acyl-[acyl-carrier-protein]--UDP-N-acetylglucosamine O-acyltransferase of Helicobacter pylori (strain G27).